The sequence spans 104 residues: AVIToxin-VAR2 (104 aa).

An N-terminal signal peptide occupies residues 1–19; it reads MRSLLCAPLLLLLLSAGES. 5 disulfide bridges follow: Cys26-Cys38, Cys32-Cys50, Cys37-Cys78, Cys60-Cys86, and Cys80-Cys96.

The protein belongs to the AVIT (prokineticin) family. As to expression, expressed by the venom gland.

It localises to the secreted. Potent agonist for both PKR1/PROKR1 and PKR2/PROKR2. Potently contracts gastrointestinal (GI) smooth muscle. The protein is AVIToxin-VAR2 of Varanus varius (Lace monitor lizard).